Here is an 85-residue protein sequence, read N- to C-terminus: Large ribosomal subunit protein uL29 (85 aa).

This sequence belongs to the universal ribosomal protein uL29 family.

In Thermobifida fusca (strain YX), this protein is Large ribosomal subunit protein uL29.